The following is a 283-amino-acid chain: Bifunctional protein FolD (283 aa).

Position 166-168 (166-168 (GAS)) interacts with NADP(+).

Belongs to the tetrahydrofolate dehydrogenase/cyclohydrolase family. Homodimer.

The enzyme catalyses (6R)-5,10-methylene-5,6,7,8-tetrahydrofolate + NADP(+) = (6R)-5,10-methenyltetrahydrofolate + NADPH. It catalyses the reaction (6R)-5,10-methenyltetrahydrofolate + H2O = (6R)-10-formyltetrahydrofolate + H(+). It participates in one-carbon metabolism; tetrahydrofolate interconversion. Catalyzes the oxidation of 5,10-methylenetetrahydrofolate to 5,10-methenyltetrahydrofolate and then the hydrolysis of 5,10-methenyltetrahydrofolate to 10-formyltetrahydrofolate. In Coxiella burnetii (strain Dugway 5J108-111), this protein is Bifunctional protein FolD.